A 289-amino-acid chain; its full sequence is Polyketide biosynthesis malonyl CoA-acyl carrier protein transacylase BaeC (289 aa).

Catalysis depends on residues serine 87 and histidine 193.

Belongs to the FabD family.

The protein resides in the cytoplasm. It catalyses the reaction holo-[ACP] + malonyl-CoA = malonyl-[ACP] + CoA. It participates in antibiotic biosynthesis; bacillaene biosynthesis. In terms of biological role, involved in some intermediate steps for the synthesis of the antibiotic polyketide bacillaene which is involved in secondary metabolism. It catalyzes the transfer of the malonyl-CoA group to the acyl-carrier-protein AcpK (Mal-AcpK). The chain is Polyketide biosynthesis malonyl CoA-acyl carrier protein transacylase BaeC (baeC) from Bacillus velezensis (strain DSM 23117 / BGSC 10A6 / LMG 26770 / FZB42) (Bacillus amyloliquefaciens subsp. plantarum).